The chain runs to 314 residues: Olfactory receptor 4K2 (314 aa).

At 1-25 (MDVGNKSTMSEFVLLGLSNSWELQM) the chain is on the extracellular side. Asparagine 5 is a glycosylation site (N-linked (GlcNAc...) asparagine). Residues 26-49 (FFFMVFSLLYVATMVGNSLIVITV) form a helical membrane-spanning segment. Topologically, residues 50 to 57 (IVDPHLHS) are cytoplasmic. A helical transmembrane segment spans residues 58-79 (PMYFLLTNLSIIDMSLASFATP). Over 80-100 (KMITDYLTGHKTISFDGCLTQ) the chain is Extracellular. An intrachain disulfide couples cysteine 97 to cysteine 189. Residues 101 to 120 (IFFLHLFTGTEIILLMAMSF) form a helical membrane-spanning segment. The Cytoplasmic portion of the chain corresponds to 121–139 (DRYIAICKPLHYASVISPQ). A helical membrane pass occupies residues 140-158 (VCVALVVASWIMGVMHSMS). Residues 159–195 (QVIFALTLPFCGPYEVDSFFCDLPVVFQLACVDTYVL) lie on the Extracellular side of the membrane. Residues 196 to 219 (GLFMISTSGIIALSCFIVLFNSYV) traverse the membrane as a helical segment. Residues 220 to 235 (IVLVTVKHHSSRGSSK) lie on the Cytoplasmic side of the membrane. Residues 236 to 258 (ALSTCTAHFIVVFLFFGPCIFIY) traverse the membrane as a helical segment. Over 259–269 (MWPLSSFLTDK) the chain is Extracellular. Residues 270–289 (ILSVFYTIFTPTLNPIIYTL) traverse the membrane as a helical segment. Topologically, residues 290 to 314 (RNQEVKIAMRKLKNRFLNFNKAMPS) are cytoplasmic.

It belongs to the G-protein coupled receptor 1 family.

Its subcellular location is the cell membrane. Odorant receptor. This is Olfactory receptor 4K2 (OR4K2) from Homo sapiens (Human).